The following is a 538-amino-acid chain: Phosphoenolpyruvate carboxykinase (ATP) (538 aa).

Substrate is bound by residues R64, Y206, and K212. ATP is bound by residues K212, H231, and 247 to 255 (GLSGTGKTT). The Mn(2+) site is built by K212 and H231. D268 contributes to the Mn(2+) binding site. Residues E296, R332, 448–449 (RI), and T454 contribute to the ATP site. R332 serves as a coordination point for substrate.

This sequence belongs to the phosphoenolpyruvate carboxykinase (ATP) family. As to quaternary structure, monomer. The cofactor is Mn(2+).

The protein resides in the cytoplasm. The enzyme catalyses oxaloacetate + ATP = phosphoenolpyruvate + ADP + CO2. Its pathway is carbohydrate biosynthesis; gluconeogenesis. In terms of biological role, involved in the gluconeogenesis. Catalyzes the conversion of oxaloacetate (OAA) to phosphoenolpyruvate (PEP) through direct phosphoryl transfer between the nucleoside triphosphate and OAA. In Enterobacter sp. (strain 638), this protein is Phosphoenolpyruvate carboxykinase (ATP).